The chain runs to 147 residues: Ubiquitin-conjugating enzyme E2 4 (147 aa).

One can recognise a UBC core domain in the interval 1-147 (MSLKRINKEL…AKEWTKKYAV (147 aa)). The active-site Glycyl thioester intermediate is the Cys-85.

This sequence belongs to the ubiquitin-conjugating enzyme family.

The catalysed reaction is S-ubiquitinyl-[E1 ubiquitin-activating enzyme]-L-cysteine + [E2 ubiquitin-conjugating enzyme]-L-cysteine = [E1 ubiquitin-activating enzyme]-L-cysteine + S-ubiquitinyl-[E2 ubiquitin-conjugating enzyme]-L-cysteine.. Its pathway is protein modification; protein ubiquitination. E2 ubiquitin-conjugating enzyme that catalyzes the covalent attachment of ubiquitin to other proteins. Mediates the selective degradation of short-lived and abnormal proteins. Mediates ubiquitination of PEX5. In Candida albicans (Yeast), this protein is Ubiquitin-conjugating enzyme E2 4 (UBC4).